Reading from the N-terminus, the 216-residue chain is FMN-dependent NADH:quinone oxidoreductase 3 (216 aa).

FMN is bound by residues Ser-10 and 16–18 (SAS).

Belongs to the azoreductase type 1 family. Homodimer. Requires FMN as cofactor.

The catalysed reaction is 2 a quinone + NADH + H(+) = 2 a 1,4-benzosemiquinone + NAD(+). It carries out the reaction N,N-dimethyl-1,4-phenylenediamine + anthranilate + 2 NAD(+) = 2-(4-dimethylaminophenyl)diazenylbenzoate + 2 NADH + 2 H(+). In terms of biological role, quinone reductase that provides resistance to thiol-specific stress caused by electrophilic quinones. Also exhibits azoreductase activity. Catalyzes the reductive cleavage of the azo bond in aromatic azo compounds to the corresponding amines. The sequence is that of FMN-dependent NADH:quinone oxidoreductase 3 from Pseudomonas fluorescens (strain ATCC BAA-477 / NRRL B-23932 / Pf-5).